A 245-amino-acid polypeptide reads, in one-letter code: Lactate utilization protein A 1 (245 aa).

It belongs to the LutA/YkgE family.

Its function is as follows. Is involved in L-lactate degradation and allows cells to grow with lactate as the sole carbon source. This chain is Lactate utilization protein A 1, found in Bacillus mycoides (strain KBAB4) (Bacillus weihenstephanensis).